The primary structure comprises 339 residues: Ketol-acid reductoisomerase (NADP(+)) (339 aa).

The 182-residue stretch at 1–182 folds into the KARI N-terminal Rossmann domain; that stretch reads MRVYYDRDAD…GGGRSGIIET (182 aa). Residues 24-27, Lys48, Ser51, Thr53, and 83-86 each bind NADP(+); these read YGSQ and DELQ. Residue His108 is part of the active site. Gly134 lines the NADP(+) pocket. Positions 183-328 constitute a KARI C-terminal knotted domain; it reads NFKEECETDL…AKLRGMMPWI (146 aa). Mg(2+) is bound by residues Asp191, Glu195, Glu227, and Glu231. Ser252 serves as a coordination point for substrate.

The protein belongs to the ketol-acid reductoisomerase family. The cofactor is Mg(2+).

It catalyses the reaction (2R)-2,3-dihydroxy-3-methylbutanoate + NADP(+) = (2S)-2-acetolactate + NADPH + H(+). The catalysed reaction is (2R,3R)-2,3-dihydroxy-3-methylpentanoate + NADP(+) = (S)-2-ethyl-2-hydroxy-3-oxobutanoate + NADPH + H(+). It functions in the pathway amino-acid biosynthesis; L-isoleucine biosynthesis; L-isoleucine from 2-oxobutanoate: step 2/4. It participates in amino-acid biosynthesis; L-valine biosynthesis; L-valine from pyruvate: step 2/4. Its function is as follows. Involved in the biosynthesis of branched-chain amino acids (BCAA). Catalyzes an alkyl-migration followed by a ketol-acid reduction of (S)-2-acetolactate (S2AL) to yield (R)-2,3-dihydroxy-isovalerate. In the isomerase reaction, S2AL is rearranged via a Mg-dependent methyl migration to produce 3-hydroxy-3-methyl-2-ketobutyrate (HMKB). In the reductase reaction, this 2-ketoacid undergoes a metal-dependent reduction by NADPH to yield (R)-2,3-dihydroxy-isovalerate. This chain is Ketol-acid reductoisomerase (NADP(+)), found in Sinorhizobium fredii (strain NBRC 101917 / NGR234).